A 337-amino-acid chain; its full sequence is Beta-hexosaminidase (337 aa).

Residues Asp-62, Arg-70, Arg-133, and 163–164 each bind substrate; that span reads KH. Residue His-176 is the Proton donor/acceptor of the active site. Asp-248 functions as the Nucleophile in the catalytic mechanism.

This sequence belongs to the glycosyl hydrolase 3 family. NagZ subfamily.

It is found in the cytoplasm. The enzyme catalyses Hydrolysis of terminal non-reducing N-acetyl-D-hexosamine residues in N-acetyl-beta-D-hexosaminides.. The protein operates within cell wall biogenesis; peptidoglycan recycling. Plays a role in peptidoglycan recycling by cleaving the terminal beta-1,4-linked N-acetylglucosamine (GlcNAc) from peptide-linked peptidoglycan fragments, giving rise to free GlcNAc, anhydro-N-acetylmuramic acid and anhydro-N-acetylmuramic acid-linked peptides. This chain is Beta-hexosaminidase, found in Psychromonas ingrahamii (strain DSM 17664 / CCUG 51855 / 37).